A 409-amino-acid chain; its full sequence is Pectin acetylesterase 4 (409 aa).

An N-terminal signal peptide occupies residues 1 to 32 (MVIRSLLQCRTWSKSDWLLASIGIVLIVYSFS). Residues Asn-36 and Asn-163 are each glycosylated (N-linked (GlcNAc...) asparagine). Catalysis depends on charge relay system residues Ser-199, Asp-295, and His-362. N-linked (GlcNAc...) asparagine glycosylation is found at Asn-379 and Asn-406.

This sequence belongs to the pectinacetylesterase family.

It is found in the secreted. The protein resides in the cell wall. In terms of biological role, hydrolyzes acetyl esters in homogalacturonan regions of pectin. In type I primary cell wall, galacturonic acid residues of pectin can be acetylated at the O-2 and O-3 positions. Decreasing the degree of acetylation of pectin gels in vitro alters their physical properties. The chain is Pectin acetylesterase 4 from Arabidopsis thaliana (Mouse-ear cress).